The chain runs to 612 residues: UvrABC system protein C (612 aa).

Residues 18–96 form the GIY-YIG domain; that stretch reads TRPGVYRMMD…IKTLKPPYNI (79 aa). In terms of domain architecture, UVR spans 208–243; sequence PEIINETIQQMEVASAQLDFERAAVLRDQVDYLRRV.

This sequence belongs to the UvrC family. Interacts with UvrB in an incision complex.

The protein resides in the cytoplasm. Its function is as follows. The UvrABC repair system catalyzes the recognition and processing of DNA lesions. UvrC both incises the 5' and 3' sides of the lesion. The N-terminal half is responsible for the 3' incision and the C-terminal half is responsible for the 5' incision. The protein is UvrABC system protein C of Hahella chejuensis (strain KCTC 2396).